A 601-amino-acid polypeptide reads, in one-letter code: Transcription factor ATEG_07666 (601 aa).

Positions 17 to 44 (CEECRRRKARCDRVRPKCGFCTENGMQC) form a DNA-binding region, zn(2)-C6 fungal-type.

The protein localises to the nucleus. In terms of biological role, specific transcriptional regulator for the azasperpyranone A biosynthesis cluster B. The polypeptide is Transcription factor ATEG_07666 (Aspergillus terreus (strain NIH 2624 / FGSC A1156)).